Consider the following 238-residue polypeptide: Small ribosomal subunit protein uS2 (238 aa).

This sequence belongs to the universal ribosomal protein uS2 family.

The protein is Small ribosomal subunit protein uS2 of Actinobacillus pleuropneumoniae serotype 5b (strain L20).